Here is a 197-residue protein sequence, read N- to C-terminus: Probable adenylyl-sulfate kinase (197 aa).

33 to 40 (GLSGSGKS) lines the ATP pocket. Serine 107 acts as the Phosphoserine intermediate in catalysis.

This sequence belongs to the APS kinase family.

The catalysed reaction is adenosine 5'-phosphosulfate + ATP = 3'-phosphoadenylyl sulfate + ADP + H(+). Its pathway is sulfur metabolism; hydrogen sulfide biosynthesis; sulfite from sulfate: step 2/3. Its function is as follows. Catalyzes the synthesis of activated sulfate. This Bacillus subtilis (strain 168) protein is Probable adenylyl-sulfate kinase (cysC).